The chain runs to 347 residues: NADH-ubiquinone oxidoreductase chain 2 (347 aa).

The next 11 membrane-spanning stretches (helical) occupy residues 1 to 21, 25 to 45, 59 to 79, 96 to 116, 123 to 143, 153 to 173, 178 to 198, 200 to 220, 239 to 259, 278 to 298, and 325 to 345; these read MNPL…IITM, HWLT…PLIM, YFLI…INFM, TIIL…FWVP, LLST…SILY, IILA…LNQT, IMAY…IYNP, LMLL…TILI, ILMM…PLSG, ISLT…RLIY, and FLPT…MMFI.

The protein belongs to the complex I subunit 2 family. In terms of assembly, core subunit of respiratory chain NADH dehydrogenase (Complex I) which is composed of 45 different subunits. Interacts with TMEM242.

It is found in the mitochondrion inner membrane. It carries out the reaction a ubiquinone + NADH + 5 H(+)(in) = a ubiquinol + NAD(+) + 4 H(+)(out). In terms of biological role, core subunit of the mitochondrial membrane respiratory chain NADH dehydrogenase (Complex I) that is believed to belong to the minimal assembly required for catalysis. Complex I functions in the transfer of electrons from NADH to the respiratory chain. The immediate electron acceptor for the enzyme is believed to be ubiquinone. In Oryzorictes hova (Hova rice tenrec), this protein is NADH-ubiquinone oxidoreductase chain 2.